The chain runs to 491 residues: Probable glycine dehydrogenase (decarboxylating) subunit 2 (491 aa).

K273 is modified (N6-(pyridoxal phosphate)lysine).

Belongs to the GcvP family. C-terminal subunit subfamily. The glycine cleavage system is composed of four proteins: P, T, L and H. In this organism, the P 'protein' is a heterodimer of two subunits. It depends on pyridoxal 5'-phosphate as a cofactor.

The enzyme catalyses N(6)-[(R)-lipoyl]-L-lysyl-[glycine-cleavage complex H protein] + glycine + H(+) = N(6)-[(R)-S(8)-aminomethyldihydrolipoyl]-L-lysyl-[glycine-cleavage complex H protein] + CO2. The glycine cleavage system catalyzes the degradation of glycine. The P protein binds the alpha-amino group of glycine through its pyridoxal phosphate cofactor; CO(2) is released and the remaining methylamine moiety is then transferred to the lipoamide cofactor of the H protein. The protein is Probable glycine dehydrogenase (decarboxylating) subunit 2 of Bacillus cereus (strain AH187).